Reading from the N-terminus, the 69-residue chain is Large ribosomal subunit protein bL31 (69 aa).

Residues Cys17, Cys19, Cys37, and Cys40 each contribute to the Zn(2+) site.

This sequence belongs to the bacterial ribosomal protein bL31 family. Type A subfamily. In terms of assembly, part of the 50S ribosomal subunit. The cofactor is Zn(2+).

Binds the 23S rRNA. The chain is Large ribosomal subunit protein bL31 from Caldicellulosiruptor bescii (strain ATCC BAA-1888 / DSM 6725 / KCTC 15123 / Z-1320) (Anaerocellum thermophilum).